The following is a 45-amino-acid chain: uncharacterized protein (45 aa).

This is an uncharacterized protein from Methanocaldococcus jannaschii (strain ATCC 43067 / DSM 2661 / JAL-1 / JCM 10045 / NBRC 100440) (Methanococcus jannaschii).